Consider the following 287-residue polypeptide: Large ribosomal subunit protein uL2 (287 aa).

2 disordered regions span residues 25–57 (TKTE…RGGG) and 203–287 (LSAG…GRES). Composition is skewed to basic residues over residues 209–220 (GRNRWKGRRPKV) and 259–287 (TRNR…GRES).

It belongs to the universal ribosomal protein uL2 family. Part of the 50S ribosomal subunit. Forms a bridge to the 30S subunit in the 70S ribosome.

In terms of biological role, one of the primary rRNA binding proteins. Required for association of the 30S and 50S subunits to form the 70S ribosome, for tRNA binding and peptide bond formation. It has been suggested to have peptidyltransferase activity; this is somewhat controversial. Makes several contacts with the 16S rRNA in the 70S ribosome. The protein is Large ribosomal subunit protein uL2 of Nostoc punctiforme (strain ATCC 29133 / PCC 73102).